Reading from the N-terminus, the 115-residue chain is Potassium-transporting ATPase potassium-binding subunit (115 aa).

A run of 2 helical transmembrane segments spans residues 8–28 (YFLL…VAFF) and 60–80 (SYCT…YGLL).

This sequence belongs to the KdpA family. The system is composed of three essential subunits: KdpA, KdpB and KdpC.

Its subcellular location is the cell membrane. Its function is as follows. Part of the high-affinity ATP-driven potassium transport (or Kdp) system, which catalyzes the hydrolysis of ATP coupled with the electrogenic transport of potassium into the cytoplasm. This subunit binds the extracellular potassium ions and delivers the ions to the membrane domain of KdpB through an intramembrane tunnel. The chain is Potassium-transporting ATPase potassium-binding subunit from Geobacillus stearothermophilus (Bacillus stearothermophilus).